Reading from the N-terminus, the 494-residue chain is Tripartite motif-containing protein 5 (494 aa).

Ala2 carries the N-acetylalanine modification. The segment at 15–59 adopts an RING-type zinc-finger fold; the sequence is CPICLELLTQPLSLDCGHSFCQACLTANHKTSMPDEGERSCPVCR. Ser86 bears the Phosphoserine mark. Residues 91-133 form a B box-type zinc finger; that stretch reads QKVDHCARHGEKLLLFCQEDRKVICWLCERSQEHRGHHTFLTE. Zn(2+) is bound by residues Cys96, His99, Cys118, and His124. Residues 132–241 are a coiled coil; it reads TEEVAQEYQV…LISDLEHRLQ (110 aa). Positions 186-199 are required for interaction with GABARAP and for autophagy; it reads FEQLRHILDWVESN. Residues 282–494 form the B30.2/SPRY domain; that stretch reads LKVMLEVLRE…VPMTLCSPSS (213 aa).

It belongs to the TRIM/RBCC family. As to quaternary structure, can form homodimers and homotrimers. In addition to lower-order dimerization, also exhibits a higher-order multimerization and both low- and high-order multimerizations are essential for its restriction activity. Interacts with BTBD1 and BTBD2. Interacts with PSMC4, PSMC5, PSMD7 and HSPA8/HSC70. Interacts (via B30.2/SPRY domain) with HSPA1A/B. Interacts with PSMC2, MAP3K7/TAK1, TAB2 and TAB3. Interacts with SQSTM1. Interacts with TRIM6 and TRIM34. Interacts with ULK1 (phosphorylated form), GABARAP, GABARAPL1, GABARAPL2, MAP1LC3A, MAP1LC3C and BECN1. Post-translationally, degraded in a proteasome-independent fashion in the absence of viral infection but in a proteasome-dependent fashion following exposure to restriction sensitive virus. In terms of processing, autoubiquitinated in a RING finger- and UBE2D2-dependent manner. Monoubiquitinated by TRIM21. Deubiquitinated by Yersinia YopJ. Ubiquitination may not lead to proteasomal degradation.

It is found in the cytoplasm. The protein localises to the nucleus. The enzyme catalyses S-ubiquitinyl-[E2 ubiquitin-conjugating enzyme]-L-cysteine + [acceptor protein]-L-lysine = [E2 ubiquitin-conjugating enzyme]-L-cysteine + N(6)-ubiquitinyl-[acceptor protein]-L-lysine.. The protein operates within protein modification; protein ubiquitination. Its function is as follows. Capsid-specific restriction factor that prevents infection from non-host-adapted retroviruses. Blocks viral replication early in the life cycle, after viral entry but before reverse transcription. In addition to acting as a capsid-specific restriction factor, also acts as a pattern recognition receptor that activates innate immune signaling in response to the retroviral capsid lattice. Binding to the viral capsid triggers its E3 ubiquitin ligase activity, and in concert with the heterodimeric ubiquitin conjugating enzyme complex UBE2V1-UBE2N (also known as UBC13-UEV1A complex) generates 'Lys-63'-linked polyubiquitin chains, which in turn are catalysts in the autophosphorylation of the MAP3K7/TAK1 complex (includes TAK1, TAB2, and TAB3). Activation of the MAP3K7/TAK1 complex by autophosphorylation results in the induction and expression of NF-kappa-B and MAPK-responsive inflammatory genes, thereby leading to an innate immune response in the infected cell. Plays a role in regulating autophagy through activation of autophagy regulator BECN1 by causing its dissociation from its inhibitors BCL2 and TAB2. The protein is Tripartite motif-containing protein 5 (TRIM5) of Symphalangus syndactylus (Siamang).